A 116-amino-acid chain; its full sequence is Large ribosomal subunit protein uL18 (116 aa).

It belongs to the universal ribosomal protein uL18 family. In terms of assembly, part of the 50S ribosomal subunit; part of the 5S rRNA/L5/L18/L25 subcomplex. Contacts the 5S and 23S rRNAs.

This is one of the proteins that bind and probably mediate the attachment of the 5S RNA into the large ribosomal subunit, where it forms part of the central protuberance. In Caulobacter vibrioides (strain ATCC 19089 / CIP 103742 / CB 15) (Caulobacter crescentus), this protein is Large ribosomal subunit protein uL18.